Consider the following 173-residue polypeptide: Inorganic pyrophosphatase (173 aa).

Residues lysine 29, arginine 43, and tyrosine 55 each contribute to the substrate site. Positions 65, 70, and 102 each coordinate Mg(2+). Position 141 (tyrosine 141) interacts with substrate.

It belongs to the PPase family. As to quaternary structure, homohexamer. It depends on Mg(2+) as a cofactor.

Its subcellular location is the cytoplasm. The enzyme catalyses diphosphate + H2O = 2 phosphate + H(+). Functionally, catalyzes the hydrolysis of inorganic pyrophosphate (PPi) forming two phosphate ions. This is Inorganic pyrophosphatase from Rickettsia conorii (strain ATCC VR-613 / Malish 7).